Consider the following 191-residue polypeptide: A-type ATP synthase subunit E 1 (191 aa).

It belongs to the V-ATPase E subunit family. As to quaternary structure, has multiple subunits with at least A(3), B(3), C, D, E, F, H, I and proteolipid K(x).

It localises to the cell membrane. In terms of biological role, component of the A-type ATP synthase that produces ATP from ADP in the presence of a proton gradient across the membrane. This Methanospirillum hungatei JF-1 (strain ATCC 27890 / DSM 864 / NBRC 100397 / JF-1) protein is A-type ATP synthase subunit E 1.